Reading from the N-terminus, the 108-residue chain is Tetrahydromethanopterin S-methyltransferase subunit B (108 aa).

The helical transmembrane segment at 80-100 (AFYGIVVGLAFSGLLALIIFI) threads the bilayer.

Belongs to the MtrB family. As to quaternary structure, the complex is composed of 8 subunits; MtrA, MtrB, MtrC, MtrD, MtrE, MtrF, MtrG and MtrH.

Its subcellular location is the cell membrane. It carries out the reaction 5-methyl-5,6,7,8-tetrahydromethanopterin + coenzyme M + 2 Na(+)(in) = 5,6,7,8-tetrahydromethanopterin + methyl-coenzyme M + 2 Na(+)(out). Its pathway is one-carbon metabolism; methanogenesis from CO(2); methyl-coenzyme M from 5,10-methylene-5,6,7,8-tetrahydromethanopterin: step 2/2. Part of a complex that catalyzes the formation of methyl-coenzyme M and tetrahydromethanopterin from coenzyme M and methyl-tetrahydromethanopterin. This is an energy-conserving, sodium-ion translocating step. The sequence is that of Tetrahydromethanopterin S-methyltransferase subunit B from Methanosarcina acetivorans (strain ATCC 35395 / DSM 2834 / JCM 12185 / C2A).